Consider the following 76-residue polypeptide: Parvalbumin beta 3 (76 aa).

Residue alanine 1 is modified to N-acetylalanine. One can recognise an EF-hand domain in the interval 31 to 66 (KSPEEVKKFFAIIDQDHSGFIEEEELKLFLQTFSAG). The Ca(2+) site is built by aspartate 44, aspartate 46, serine 48, phenylalanine 50, glutamate 52, and glutamate 55.

The protein belongs to the parvalbumin family.

Functionally, in muscle, parvalbumin is thought to be involved in relaxation after contraction. It binds two calcium ions. This is Parvalbumin beta 3 from Merluccius polylepis (Southern hake).